Consider the following 543-residue polypeptide: T-complex protein 1 subunit eta (543 aa).

Met-1 carries the N-acetylmethionine modification. Gly-41 contributes to the ADP binding site. Gly-41 is a binding site for ATP. An N6-acetyllysine modification is found at Lys-67. A Mg(2+)-binding site is contributed by Asp-92. Gly-93, Thr-94, Thr-95, Ser-96, Ser-164, and Ser-165 together coordinate ADP. Gly-93 is an ATP binding site. Ser-96 provides a ligand contact to ATP. N6-acetyllysine occurs at positions 250 and 320. ATP-binding residues include Arg-398 and Gly-409. Gly-409 contributes to the ADP binding site. A Glycyl lysine isopeptide (Lys-Gly) (interchain with G-Cter in SUMO2) cross-link involves residue Lys-430. Positions 494 and 499 each coordinate ADP. Arg-499 contributes to the ATP binding site. Residues 524–543 form a disordered region; the sequence is RSTVDASPAAGRGRGRGRLH. At Arg-535 the chain carries Omega-N-methylarginine.

The protein belongs to the TCP-1 chaperonin family. As to quaternary structure, component of the chaperonin-containing T-complex (TRiC), a hexadecamer composed of two identical back-to-back stacked rings enclosing a protein folding chamber. Each ring is made up of eight different subunits: TCP1/CCT1, CCT2, CCT3, CCT4, CCT5, CCT6A/CCT6, CCT7, CCT8. Interacts with PACRG. Interacts with DLEC1.

Its subcellular location is the cytoplasm. It catalyses the reaction ATP + H2O = ADP + phosphate + H(+). Functionally, component of the chaperonin-containing T-complex (TRiC), a molecular chaperone complex that assists the folding of actin, tubulin and other proteins upon ATP hydrolysis. The TRiC complex mediates the folding of WRAP53/TCAB1, thereby regulating telomere maintenance. The polypeptide is T-complex protein 1 subunit eta (CCT7) (Bos taurus (Bovine)).